We begin with the raw amino-acid sequence, 911 residues long: MPSIIDRVLKISDNRVLKRMQATVDAVNLLEDDFRALSDAELRAETDTLRARHADGESLDLLLPEAFAAVREAAGRTLGQRHYDVQLLGGIALHQGNIAEMKTGEGKTLVATAPAYLNALSGRGVHVVTVNDFLASYQADLMGRVFRFLGMQTGVIVAGQTPAVRREQYAADITYGTNNEFGFDFLRDNMAWSLDELVQREHHYAIVDEVDSILIDEARTPLIISGPAQGEANRWYGEFARLVRRLEADTDYEVDHKKRTVGILGPGIEKVEDHLGITNLYETQNTTLIQFLNNAVKAKELFKRDKDYVVLDGEVQIVDEHTGRVLKGRRYNEGLHQAIEAKEGVEVKPENQTLATVTLQNYFRGYEKLAGMTGTAETEAAEFTSTYGLGVVVIPPNRERQRVDRNDVVYKNEKVKFDAVVDDIAERHAKGQPVLVGTTSVEKSEYLSTLLAKRGIRHEVLNAKNHAREAAIVAQAGRPGAVTVATNMAGRGTDIMLGGNAEFTAVARMQELGLDAAEDPEAYEARWPEVLAQAEAAVEDAHREVIEAGGLYVVGTERHDSRRIDNQLRGRSGRQGDPGESRFYLSLTDELMRNFNPGVAQRIMNSPSIPDDMALEFGFVSKAIQNAQAQVEGRNAEQRKNVLKYDDVMNRQREAIYTDRRSILEGEDLQDRVRRFVEDAVGNIVDAATEEGQATDWDLDQLWRDLAELYPVGISQEDVLDEVGGRGRLKAEVLKRELVSDALLAYEDREAQVGSEALREAERRVVLASIGRHWQEHLYEMDYLKEGIGLRAMAQREPLVEYQREGYTMFQNMLAGIREDAVRTLFQAQISAAPAPTSLPGVKDARAVTMAPQISVEGIDAPQRPAQLRFTGPSEDGQSAVTRSGTDSGATVAAGTNRRSRRQAERRGRRG.

Residues glutamine 86, glycine 104–threonine 108, and aspartate 494 each bind ATP. Residues valine 856 to glycine 911 form a disordered region. Residues aspartate 876 to glycine 889 are compositionally biased toward polar residues. Residues arginine 902–glycine 911 show a composition bias toward basic and acidic residues.

It belongs to the SecA family. Monomer and homodimer. Part of the essential Sec protein translocation apparatus which comprises SecA, SecYEG and auxiliary proteins SecDF. Other proteins may also be involved.

It localises to the cell membrane. It is found in the cytoplasm. It catalyses the reaction ATP + H2O + cellular proteinSide 1 = ADP + phosphate + cellular proteinSide 2.. Its function is as follows. Part of the Sec protein translocase complex. Interacts with the SecYEG preprotein conducting channel. Has a central role in coupling the hydrolysis of ATP to the transfer of proteins into and across the cell membrane, serving as an ATP-driven molecular motor driving the stepwise translocation of polypeptide chains across the membrane. The sequence is that of Protein translocase subunit SecA from Micrococcus luteus (strain ATCC 4698 / DSM 20030 / JCM 1464 / CCM 169 / CCUG 5858 / IAM 1056 / NBRC 3333 / NCIMB 9278 / NCTC 2665 / VKM Ac-2230) (Micrococcus lysodeikticus).